We begin with the raw amino-acid sequence, 591 residues long: V-type ATP synthase alpha chain (591 aa).

ATP is bound at residue 233–240; the sequence is GPFGAGKT.

The protein belongs to the ATPase alpha/beta chains family.

It carries out the reaction ATP + H2O + 4 H(+)(in) = ADP + phosphate + 5 H(+)(out). In terms of biological role, produces ATP from ADP in the presence of a proton gradient across the membrane. The V-type alpha chain is a catalytic subunit. In Streptococcus pneumoniae (strain Hungary19A-6), this protein is V-type ATP synthase alpha chain.